Consider the following 205-residue polypeptide: UPF0301 protein AZC_0488 (205 aa).

This sequence belongs to the UPF0301 (AlgH) family.

This is UPF0301 protein AZC_0488 from Azorhizobium caulinodans (strain ATCC 43989 / DSM 5975 / JCM 20966 / LMG 6465 / NBRC 14845 / NCIMB 13405 / ORS 571).